Reading from the N-terminus, the 406-residue chain is Acetylornithine aminotransferase (406 aa).

Pyridoxal 5'-phosphate contacts are provided by residues 113-114 (GT) and F145. Residue R148 coordinates N(2)-acetyl-L-ornithine. Position 233 to 236 (233 to 236 (DEIQ)) interacts with pyridoxal 5'-phosphate. At K262 the chain carries N6-(pyridoxal phosphate)lysine. Residue S290 participates in N(2)-acetyl-L-ornithine binding. T291 contacts pyridoxal 5'-phosphate.

It belongs to the class-III pyridoxal-phosphate-dependent aminotransferase family. ArgD subfamily. As to quaternary structure, homodimer. It depends on pyridoxal 5'-phosphate as a cofactor.

The protein resides in the cytoplasm. It carries out the reaction N(2)-acetyl-L-ornithine + 2-oxoglutarate = N-acetyl-L-glutamate 5-semialdehyde + L-glutamate. The protein operates within amino-acid biosynthesis; L-arginine biosynthesis; N(2)-acetyl-L-ornithine from L-glutamate: step 4/4. The protein is Acetylornithine aminotransferase of Leptospira interrogans serogroup Icterohaemorrhagiae serovar Lai (strain 56601).